The primary structure comprises 383 residues: D-aspartate oxidase 3 (383 aa).

The signal sequence occupies residues 1–17 (MLYALLLLFGGVSTVSS). Lys56 and Ser63 together coordinate FAD. N-linked (GlcNAc...) asparagine glycosylation is found at Asn152, Asn271, and Asn320. Residue Thr339 participates in FAD binding. A glycan (N-linked (GlcNAc...) asparagine) is linked at Asn371.

Belongs to the DAMOX/DASOX family. The cofactor is FAD. In both sexes, present in coelomocytes (at protein level). Expressed in hypodermal cells and the proximal gonadal sheath cells in adult hermaphrodites (at protein level). Also expressed in probable head mesodermal cells and unidentified cells in the head, and vulval muscles in adult hermaphrodites. Expressed in the seminal vesicle, spicule and tail cells in adult males (at protein level).

The protein localises to the secreted. The catalysed reaction is D-aspartate + O2 + H2O = oxaloacetate + H2O2 + NH4(+). The enzyme catalyses D-glutamate + O2 + H2O = H2O2 + 2-oxoglutarate + NH4(+). Functionally, selectively catalyzes the oxidative deamination of acidic amino acids. Plays a role in the egg-laying events and maturation processes of the reproductive organs. The protein is D-aspartate oxidase 3 (ddo-3) of Caenorhabditis elegans.